A 364-amino-acid chain; its full sequence is Aminomethyltransferase (364 aa).

Belongs to the GcvT family. In terms of assembly, the glycine cleavage system is composed of four proteins: P, T, L and H.

It carries out the reaction N(6)-[(R)-S(8)-aminomethyldihydrolipoyl]-L-lysyl-[protein] + (6S)-5,6,7,8-tetrahydrofolate = N(6)-[(R)-dihydrolipoyl]-L-lysyl-[protein] + (6R)-5,10-methylene-5,6,7,8-tetrahydrofolate + NH4(+). The glycine cleavage system catalyzes the degradation of glycine. The sequence is that of Aminomethyltransferase from Shewanella baltica (strain OS195).